The sequence spans 231 residues: Extracellular deoxyribonuclease (231 aa).

The signal sequence occupies residues 1–20 (MMIFRFVTTLAASLPLLTFA).

It belongs to the EndA/NucM nuclease family.

The protein resides in the secreted. The polypeptide is Extracellular deoxyribonuclease (dns) (Vibrio cholerae serotype O1 (strain ATCC 39315 / El Tor Inaba N16961)).